The following is a 362-amino-acid chain: 3-dehydroquinate synthase (362 aa).

Residues 71 to 76 (DGEQNK), 105 to 109 (GVIGD), 129 to 130 (TT), Lys142, and Lys151 contribute to the NAD(+) site. Zn(2+)-binding residues include Glu184, His247, and His264.

It belongs to the sugar phosphate cyclases superfamily. Dehydroquinate synthase family. It depends on Co(2+) as a cofactor. Zn(2+) is required as a cofactor. Requires NAD(+) as cofactor.

Its subcellular location is the cytoplasm. The catalysed reaction is 7-phospho-2-dehydro-3-deoxy-D-arabino-heptonate = 3-dehydroquinate + phosphate. The protein operates within metabolic intermediate biosynthesis; chorismate biosynthesis; chorismate from D-erythrose 4-phosphate and phosphoenolpyruvate: step 2/7. Catalyzes the conversion of 3-deoxy-D-arabino-heptulosonate 7-phosphate (DAHP) to dehydroquinate (DHQ). The sequence is that of 3-dehydroquinate synthase from Blochmanniella pennsylvanica (strain BPEN).